Reading from the N-terminus, the 34-residue chain is Cytochrome b6-f complex subunit 8 (34 aa).

The helical transmembrane segment at 3 to 23 (LLTFGWAALLAVFTFSLAMVV) threads the bilayer.

The protein belongs to the PetN family. The 4 large subunits of the cytochrome b6-f complex are cytochrome b6, subunit IV (17 kDa polypeptide, PetD), cytochrome f and the Rieske protein, while the 4 small subunits are PetG, PetL, PetM and PetN. The complex functions as a dimer.

Its subcellular location is the cellular thylakoid membrane. Component of the cytochrome b6-f complex, which mediates electron transfer between photosystem II (PSII) and photosystem I (PSI), cyclic electron flow around PSI, and state transitions. The polypeptide is Cytochrome b6-f complex subunit 8 (Synechococcus elongatus (strain ATCC 33912 / PCC 7942 / FACHB-805) (Anacystis nidulans R2)).